Consider the following 842-residue polypeptide: MPLSYQHFRRLLLLDEEAGPLEEELPRLADEDLNRRVAEDLHLQLPNVSIPWTHKVGNFTGLYSSTIPVFNPDWQTPSFPNIHLHQDIITKCEQFVGPLTVNEKRRLKLVMPARFFPNSTKYLPLDKGIKPYYPENVVNHYFQTRHYLHTLWKAGILYKRETSRSASFCGSPYTWEQDLQHGAFLDGPSRVGKEPFRQQSSRIPSRSPVGPSIQSKYQQSRLGLQSQKGPLARGQQGRSWSLWTRVHPSTRRPFGVEPSVSGHTNNFASRSASCLHQSSVREAAYSHLSTTKRQSSSGHAVELYSIPPSSTKSQSQGPVFSCWWLQFRDSEPCSDYCLSHLVNLLQDWGPCTEHGEHHIRIPRTPARVTGGVFLVDKNPHNTAESRLVVDFSQFSRGSARVSWPKFAVPNLQSLTNLLSSNLSWLSLDVSAAFYHIPLHPAAMPHLLVGSSGLSRYVARLSSDSRILDHQYGTLQNLHDSCSRQLYVSLMLLYKTFGRKLHLYSHPIILGFRKIPMGVGLSPFLLAQFTSAICSVVRRAFPHCLAFSYMDDVVLGAKSVQHLESLYTAVTNFLLSLGIHLNPNKTKRWGYSLNFMGYVIGSWGTLPQEHITQKIKQCFRKLPVNRPIDWKVCQRITGLLGFAAPFTQCGYPALMPLYACIQAKQAFTFSPTYKAFLCKQYMNLYPVARQRPGLCQVFADATPTGWGLAIGHQRMRGTFVAPLPIHTAELLAACFARSRSGAKLIGTDNSVVLSRKYTSFPWLLGCAANWILRGTSFVYVPSALNPADDPSRGRLGLCRPLLRLPFLPTTGRTSLYAVSPSVPSHLPDRVHFASPLHVTWKPP.

The terminal protein domain (TP) stretch occupies residues 1–177; the sequence is MPLSYQHFRR…FCGSPYTWEQ (177 aa). Residues 178 to 345 are spacer; sequence DLQHGAFLDG…YCLSHLVNLL (168 aa). A disordered region spans residues 184 to 238; sequence FLDGPSRVGKEPFRQQSSRIPSRSPVGPSIQSKYQQSRLGLQSQKGPLARGQQGR. Residues 197–208 show a composition bias toward low complexity; sequence RQQSSRIPSRSP. A compositionally biased stretch (polar residues) spans 212-228; sequence SIQSKYQQSRLGLQSQK. The tract at residues 346–689 is polymerase/reverse transcriptase domain (RT); it reads QDWGPCTEHG…YMNLYPVARQ (344 aa). In terms of domain architecture, Reverse transcriptase spans 356–599; it reads EHHIRIPRTP…YSLNFMGYVI (244 aa). Asp428, Asp550, and Asp551 together coordinate Mg(2+).

The protein belongs to the hepadnaviridae P protein family.

It catalyses the reaction DNA(n) + a 2'-deoxyribonucleoside 5'-triphosphate = DNA(n+1) + diphosphate. It carries out the reaction Endonucleolytic cleavage to 5'-phosphomonoester.. Activated by host HSP70 and HSP40 in vitro to be able to bind the epsilon loop of the pgRNA. Because deletion of the RNase H region renders the protein partly chaperone-independent, the chaperones may be needed indirectly to relieve occlusion of the RNA-binding site by this domain. Inhibited by several reverse-transcriptase inhibitors: Lamivudine, Adefovir and Entecavir. Its function is as follows. Multifunctional enzyme that converts the viral RNA genome into dsDNA in viral cytoplasmic capsids. This enzyme displays a DNA polymerase activity that can copy either DNA or RNA templates, and a ribonuclease H (RNase H) activity that cleaves the RNA strand of RNA-DNA heteroduplexes in a partially processive 3'- to 5'-endonucleasic mode. Neo-synthesized pregenomic RNA (pgRNA) are encapsidated together with the P protein, and reverse-transcribed inside the nucleocapsid. Initiation of reverse-transcription occurs first by binding the epsilon loop on the pgRNA genome, and is initiated by protein priming, thereby the 5'-end of (-)DNA is covalently linked to P protein. Partial (+)DNA is synthesized from the (-)DNA template and generates the relaxed circular DNA (RC-DNA) genome. After budding and infection, the RC-DNA migrates in the nucleus, and is converted into a plasmid-like covalently closed circular DNA (cccDNA). The activity of P protein does not seem to be necessary for cccDNA generation, and is presumably released from (+)DNA by host nuclear DNA repair machinery. The polypeptide is Protein P (Hepatitis B virus genotype G (isolate IG29227/2000) (HBV-G)).